The following is a 316-amino-acid chain: uncharacterized protein (316 aa).

In terms of domain architecture, S4 RNA-binding spans 16–89; that stretch reads ERLDKFLARA…IPINIIYEDE (74 aa). The active site involves Asp-140.

The protein belongs to the pseudouridine synthase RluA family.

The enzyme catalyses a uridine in RNA = a pseudouridine in RNA. This is an uncharacterized protein from Aquifex aeolicus (strain VF5).